A 1456-amino-acid polypeptide reads, in one-letter code: MEQGMDYWLGQIQQKDVGKRLQVGPDLIEYLLDRQKSIDLEQDQTLLDRMVDGLATSWVNSSNYKVALLGMDILSALVTRLQDRFRTQIGTVLPSLMDRLGDAKDSVRDQDQNLLIKIMEQASNPQYMWERMFSGFKHKNFRTREGVCLCLIATLNVYGANSLTLSKIVPHICNLLGDPNSQVRDAAINCLVEIYRHVGERVRADLSKKGLPQSRLNVIFTKFDEVQKSGTMILSTTDKNFDDEDSVDGNRPSSASSSASSKAPQTARRGVSLGTGRRPGTSSAAPKTGGTAKEGAGALDEEDFIRAFEDAPTVQIYSSRDLEESLNKIREILSDDKHDWEQRISALKKIRSLLLAGAAEYDNFFQQLRLLDGAFKLSAKDLRSQVVREACITLGHLSSVLGNKFDHGAEAVMPTVFNLVPNSTKIMATSGVVTIRLIIRHTHVPRLIPIITSNCTSKSVAVRRRCYEFLDLLLQEWQTHSLERHVSVLAETIKKGIHDADSEARIVARKCYWGFHGHFSKEAEQLFHALESSYQKALQSHLKNSDSIVSLPQSDRSSSSSQESLNRPLSAKRSPTGSTVSRATSKSTTGSLQRSRSDIDVNAAATSKTKAASGASTAPFSSVAALPPGSYASLGRIRTRRQSSGSTTSTASTPADTRGRSRAKVVSQSQPGSRSSSPGKLLGSSYGGIATGPQRVPQMPSEKRSKIPRSQGCSRETSPSRTVLDRFGISQPGRIPSAMRVLSSSTDLEAAVADALLLGDSRNKMKPVRRRYEPYGMYSDDDANSDASSACSERSYSSKNGGIPHYLRQTEDVAEVLNHCASSNWSERKEGLVGLQNLLKSQRLLSRVELKRLCEIFTRMFADPHSKRVFSMFLETLVDFVIIHKDDLQDWLFILLTQLLKKMGADLLGSVQAKVQKALDVTRDSFPFDQQFNILMRFIVDQTQTPNLKVKVAILKYIESLARQMDPTDFVNSSETRLAVSRIITWTTEPKSSDVRKAAQVVLISLFELNTPEFTMLLGALPKTFQDGATKLLHNHLKNSSNSSMGSPSNTIGRTPSRHSSSRASPLTSPTNCSHGGLSPSMLDYDTENLNSDEIYSSLRGVTEAIEKFSFRSQVDLNEPVRRDGKKESEMGSCDAGMASPASDLRGGTDMVEGGRMALDNKTSLLNTQPPRAFTGPRGREYNPYAYSDSINSYDKTALKEAVFDDDMDQLRDVPIDHSDLVADLLKELSNHNERVEERKGALCELLKITREDNLAVWEEHFKTILLLLLETLGDKDHAIRALALRVLREILRNQPARFKNYAELTIMKTLEAHKDSHKEVVRAAEEAASTLAGSIHPEQCIKVLCPIIQTADYPINLAAIKMQTKVIERISKESLHQILPDIIPGLLQGYDNTESSVRKASVFCLVAVYSVIGEELKPYLAQLTGSKMKLLNLYIKRAQTTNSNSSSSSDVSTHS.

HEAT repeat units follow at residues L68–T87, Q88–N124, and L163–E200. The segment at T237–A296 is disordered. Residues A284–A296 show a composition bias toward low complexity. Residues T442–T479 form an HEAT 4 repeat. Disordered regions lie at residues S547–G728 and G776–Y796. Positions S550–L569 are enriched in low complexity. A compositionally biased stretch (polar residues) spans R573–R594. Low complexity-rich tracts occupy residues A603–A618, Q642–D656, and V665–G679. A compositionally biased stretch (polar residues) spans Q711–R721. The segment covering S785–Y796 has biased composition (low complexity). Residues Q930–P967 form an HEAT 5 repeat. Disordered stretches follow at residues L1037–P1080 and V1121–G1147. The span at K1038–N1050 shows a compositional bias: low complexity. Over residues S1062 to S1074 the composition is skewed to polar residues. The segment covering V1121 to E1130 has biased composition (basic and acidic residues). HEAT repeat units follow at residues E1260–A1297 and Q1378–E1415.

The protein belongs to the CLASP family. In terms of assembly, interacts (via C-terminus) with clip1/clip-170, and cenpe.

It localises to the cytoplasm. The protein localises to the cytoskeleton. It is found in the microtubule organizing center. Its subcellular location is the centrosome. The protein resides in the chromosome. It localises to the centromere. The protein localises to the kinetochore. It is found in the spindle. Its subcellular location is the golgi apparatus. The protein resides in the trans-Golgi network. Functionally, microtubule plus-end tracking protein that promotes the stabilization of dynamic microtubules during anaphase. Plays a crucial role in chromatin-induced microtubule formation. May also act at microtubule minus ends. May be involved in the nucleation of noncentrosomal microtubules originating from the trans-Golgi network (TGN). The protein is CLIP-associating protein 1-B of Xenopus laevis (African clawed frog).